The chain runs to 207 residues: MLAAQLDSYLADMQMTATPKQKQQLLDFVAMLAKWNKAYNLTSVRDPEQMLIRHIMDSLAASPHLVGERFIDVGTGPGLPGIPLAIMNPDKEFVLLDSLGKRIRFQKQVQFELAIGNISSVESRVEAYQPEEKFDGVLSRAFASIQDMLQWCHHLPKPTGCFYALKGQLSDEEMANMPEGFTLTDVFELKVPRLDEQRHLLRVVKAA.

S-adenosyl-L-methionine-binding positions include Gly74, Leu79, 125–126 (VE), and Arg140.

This sequence belongs to the methyltransferase superfamily. RNA methyltransferase RsmG family.

It is found in the cytoplasm. The catalysed reaction is guanosine(527) in 16S rRNA + S-adenosyl-L-methionine = N(7)-methylguanosine(527) in 16S rRNA + S-adenosyl-L-homocysteine. Functionally, specifically methylates the N7 position of guanine in position 527 of 16S rRNA. The polypeptide is Ribosomal RNA small subunit methyltransferase G (Shewanella loihica (strain ATCC BAA-1088 / PV-4)).